Reading from the N-terminus, the 132-residue chain is uncharacterized protein (132 aa).

This is an uncharacterized protein from Homo sapiens (Human).